We begin with the raw amino-acid sequence, 413 residues long: Multifunctional CCA protein (413 aa).

ATP contacts are provided by glycine 8 and arginine 11. Residues glycine 8 and arginine 11 each contribute to the CTP site. Residues aspartate 21 and aspartate 23 each coordinate Mg(2+). ATP-binding residues include arginine 91, arginine 143, and arginine 146. CTP-binding residues include arginine 91, arginine 143, and arginine 146. In terms of domain architecture, HD spans 232-333 (TGVHVMMVVD…VRLFERSDAL (102 aa)).

This sequence belongs to the tRNA nucleotidyltransferase/poly(A) polymerase family. Bacterial CCA-adding enzyme type 1 subfamily. In terms of assembly, monomer. Can also form homodimers and oligomers. Requires Mg(2+) as cofactor. Ni(2+) serves as cofactor.

It catalyses the reaction a tRNA precursor + 2 CTP + ATP = a tRNA with a 3' CCA end + 3 diphosphate. It carries out the reaction a tRNA with a 3' CCA end + 2 CTP + ATP = a tRNA with a 3' CCACCA end + 3 diphosphate. In terms of biological role, catalyzes the addition and repair of the essential 3'-terminal CCA sequence in tRNAs without using a nucleic acid template. Adds these three nucleotides in the order of C, C, and A to the tRNA nucleotide-73, using CTP and ATP as substrates and producing inorganic pyrophosphate. tRNA 3'-terminal CCA addition is required both for tRNA processing and repair. Also involved in tRNA surveillance by mediating tandem CCA addition to generate a CCACCA at the 3' terminus of unstable tRNAs. While stable tRNAs receive only 3'-terminal CCA, unstable tRNAs are marked with CCACCA and rapidly degraded. The sequence is that of Multifunctional CCA protein from Burkholderia orbicola (strain MC0-3).